A 165-amino-acid polypeptide reads, in one-letter code: MQSFLSVWLVKHGIIHRSLGFDYQGIETLQIKPEDWHSVAVILYVYGYNYLRSQCAYDVAPGGLLASVYHLTRIEYGVTRIEYGAYQPEEVCIKVFASRKNSRIPSVFWIWKSADFQERESYDMLGISYDNHPRLKRILMPESWIGWPLRKDYVAPHFYEIQDAH.

This sequence belongs to the complex I 30 kDa subunit family. NDH is composed of at least 16 different subunits, 5 of which are encoded in the nucleus.

The protein localises to the plastid. Its subcellular location is the chloroplast thylakoid membrane. It carries out the reaction a plastoquinone + NADH + (n+1) H(+)(in) = a plastoquinol + NAD(+) + n H(+)(out). The catalysed reaction is a plastoquinone + NADPH + (n+1) H(+)(in) = a plastoquinol + NADP(+) + n H(+)(out). Its function is as follows. NDH shuttles electrons from NAD(P)H:plastoquinone, via FMN and iron-sulfur (Fe-S) centers, to quinones in the photosynthetic chain and possibly in a chloroplast respiratory chain. The immediate electron acceptor for the enzyme in this species is believed to be plastoquinone. Couples the redox reaction to proton translocation, and thus conserves the redox energy in a proton gradient. The chain is NAD(P)H-quinone oxidoreductase subunit J, chloroplastic from Ipomoea purpurea (Common morning glory).